The primary structure comprises 353 residues: UPF0283 membrane protein YcjF (353 aa).

Residues 1–19 (MSEPLKPRIDFAEPLKEEP) are compositionally biased toward basic and acidic residues. The tract at residues 1–35 (MSEPLKPRIDFAEPLKEEPTSAFKAQQTFSEAESR) is disordered. Helical transmembrane passes span 70 to 90 (MVMG…LQWT), 100 to 120 (VALG…GSVV), and 213 to 233 (ESTL…FIAW).

This sequence belongs to the UPF0283 family.

The protein resides in the cell inner membrane. The chain is UPF0283 membrane protein YcjF from Salmonella choleraesuis (strain SC-B67).